Reading from the N-terminus, the 694-residue chain is Type VI secretion system spike protein VgrG2 (694 aa).

It belongs to the VgrG protein family.

The protein localises to the secreted. In terms of biological role, part of the type VI secretion system specialized secretion system, which delivers several virulence factors in both prokaryotic and eukaryotic cells during infection. Forms the spike at the tip of the elongating tube formed by haemolysin co-regulated protein Hcp. Allows the delivery of the VasX antibacterial toxin to target cells where it exerts its toxicity. In Vibrio cholerae serotype O1 (strain ATCC 39315 / El Tor Inaba N16961), this protein is Type VI secretion system spike protein VgrG2 (vgrG2).